The chain runs to 247 residues: DNA polymerase sliding clamp (247 aa).

It belongs to the PCNA family. In terms of assembly, homotrimer. The subunits circularize to form a toroid; DNA passes through its center. Replication factor C (RFC) is required to load the toroid on the DNA.

In terms of biological role, sliding clamp subunit that acts as a moving platform for DNA processing. Responsible for tethering the catalytic subunit of DNA polymerase and other proteins to DNA during high-speed replication. In Halobacterium salinarum (strain ATCC 29341 / DSM 671 / R1), this protein is DNA polymerase sliding clamp.